The primary structure comprises 228 residues: Glucose-induced degradation protein 8-A homolog (228 aa).

One can recognise a LisH domain in the interval 25–57 (QRADMNRLIMNYLVTEGFKEAAEKFRMESGIEP). One can recognise a CTLH domain in the interval 63–120 (SLDERIKIREMVLKGQIQEAIALINSLHPELLDTNRYLYFHLQQQHLIELIRLRETEA).

It belongs to the GID8 family. As to quaternary structure, identified in the CTLH complex that contains at least MAEA, RMND5A (or alternatively its paralog RMND5B), GID8, WDR26, and RANBP9 and/or RANBP10. Interacts with CTNNB1.

Core component of the CTLH E3 ubiquitin-protein ligase complex that selectively accepts ubiquitin from UBE2H and mediates ubiquitination and subsequent proteasomal degradation of target proteins. Acts as a positive regulator of Wnt signaling pathway by promoting beta-catenin (CTNNB1) nuclear accumulation. Required for normal Wnt signaling and normal dorsoventral patterning during embryogenesis. The chain is Glucose-induced degradation protein 8-A homolog (gid8a) from Danio rerio (Zebrafish).